The sequence spans 296 residues: 4-hydroxy-tetrahydrodipicolinate synthase (296 aa).

Threonine 49 is a pyruvate binding site. Tyrosine 137 acts as the Proton donor/acceptor in catalysis. Catalysis depends on lysine 165, which acts as the Schiff-base intermediate with substrate. Isoleucine 207 provides a ligand contact to pyruvate.

It belongs to the DapA family. In terms of assembly, homotetramer; dimer of dimers.

It is found in the cytoplasm. It catalyses the reaction L-aspartate 4-semialdehyde + pyruvate = (2S,4S)-4-hydroxy-2,3,4,5-tetrahydrodipicolinate + H2O + H(+). The protein operates within amino-acid biosynthesis; L-lysine biosynthesis via DAP pathway; (S)-tetrahydrodipicolinate from L-aspartate: step 3/4. Its function is as follows. Catalyzes the condensation of (S)-aspartate-beta-semialdehyde [(S)-ASA] and pyruvate to 4-hydroxy-tetrahydrodipicolinate (HTPA). This chain is 4-hydroxy-tetrahydrodipicolinate synthase, found in Bradyrhizobium diazoefficiens (strain JCM 10833 / BCRC 13528 / IAM 13628 / NBRC 14792 / USDA 110).